The chain runs to 375 residues: Growth/differentiation factor 8 (375 aa).

The first 18 residues, 1-18, serve as a signal peptide directing secretion; that stretch reads MQKLQIFVYIYLFVLIVA. Residues 19-266 constitute a propeptide that is removed on maturation; the sequence is GPVDLNENSE…VTDTPKRSRR (248 aa). Residues Asn-48 and Asn-71 are each glycosylated (N-linked (GlcNAc...) asparagine). Intrachain disulfides connect Cys-272/Cys-282, Cys-281/Cys-340, Cys-309/Cys-372, and Cys-313/Cys-374.

This sequence belongs to the TGF-beta family. In terms of assembly, homodimer; disulfide-linked. Interacts with WFIKKN2, leading to inhibit its activity. Interacts with FSTL3. Post-translationally, synthesized as large precursor molecule that undergoes proteolytic cleavage to generate an N-terminal propeptide and a disulfide linked C-terminal dimer, which is the biologically active molecule. The circulating form consists of a latent complex of the C-terminal dimer and other proteins, including its propeptide, which maintain the C-terminal dimer in a latent, inactive state. Ligand activation requires additional cleavage of the prodomain by a tolloid-like metalloproteinase.

It localises to the secreted. Acts specifically as a negative regulator of skeletal muscle growth. The chain is Growth/differentiation factor 8 (MSTN) from Aepyceros melampus (Impala).